A 669-amino-acid chain; its full sequence is Acetolactate synthase, mitochondrial (669 aa).

Residues 1–140 constitute a mitochondrion transit peptide; the sequence is MTVLAPLRRL…PRHEQAAGHA (140 aa). Glutamate 134 contacts thiamine diphosphate. Residues arginine 236, 351-372, and 403-422 contribute to the FAD site; these read HGSGYANMAMQEADLILALGVR and DISPKNIGKVVQPTEAIEGD. Residues 497–577 form a thiamine pyrophosphate binding region; that stretch reads AHQMWAATFY…VKILILNNEE (81 aa). Aspartate 548 and asparagine 575 together coordinate Mg(2+).

This sequence belongs to the TPP enzyme family. Requires Mg(2+) as cofactor. It depends on thiamine diphosphate as a cofactor.

It localises to the mitochondrion. The catalysed reaction is 2 pyruvate + H(+) = (2S)-2-acetolactate + CO2. Its pathway is amino-acid biosynthesis; L-isoleucine biosynthesis; L-isoleucine from 2-oxobutanoate: step 1/4. The protein operates within amino-acid biosynthesis; L-valine biosynthesis; L-valine from pyruvate: step 1/4. The polypeptide is Acetolactate synthase, mitochondrial (ilv1) (Schizosaccharomyces pombe (strain 972 / ATCC 24843) (Fission yeast)).